Consider the following 688-residue polypeptide: Potassium-transporting ATPase ATP-binding subunit (688 aa).

4 helical membrane passes run 34–54 (PVMF…LDIL), 62–82 (AMFT…ANMA), 219–239 (VALT…TATL), and 260–280 (VLVA…LSAI). The active-site 4-aspartylphosphate intermediate is the Asp-313. ATP contacts are provided by residues Asp-350, Glu-354, 383 to 390 (FSAQTRMS), and Lys-401. Residues Asp-524 and Asp-528 each coordinate Mg(2+). The next 3 helical transmembrane spans lie at 594–614 (FAII…LNIM), 622–642 (AILS…PLAL), and 662–682 (IYGL…DLLL).

This sequence belongs to the cation transport ATPase (P-type) (TC 3.A.3) family. Type IA subfamily. In terms of assembly, the system is composed of three essential subunits: KdpA, KdpB and KdpC.

The protein localises to the cell inner membrane. The catalysed reaction is K(+)(out) + ATP + H2O = K(+)(in) + ADP + phosphate + H(+). Its function is as follows. Part of the high-affinity ATP-driven potassium transport (or Kdp) system, which catalyzes the hydrolysis of ATP coupled with the electrogenic transport of potassium into the cytoplasm. This subunit is responsible for energy coupling to the transport system and for the release of the potassium ions to the cytoplasm. The chain is Potassium-transporting ATPase ATP-binding subunit from Yersinia pestis bv. Antiqua (strain Antiqua).